A 1140-amino-acid chain; its full sequence is Probable DNA-directed RNA polymerase II subunit RPB2 homolog (1140 aa).

Aspartate 773 serves as a coordination point for Mg(2+). Residues cysteine 1092, cysteine 1095, cysteine 1105, and cysteine 1108 each coordinate Zn(2+). A C4-type zinc finger spans residues 1092-1108 (CKDCGMMSSTSKKCHHC).

It belongs to the RNA polymerase beta chain family.

The catalysed reaction is RNA(n) + a ribonucleoside 5'-triphosphate = RNA(n+1) + diphosphate. Its function is as follows. Component of the DNA-dependent RNA polymerase that catalyzes the transcription of DNA into RNA using the four ribonucleoside triphosphates as substrates. Second largest component of RNA polymerase II which synthesizes mRNA precursors and many functional non-coding RNAs. Proposed to contribute to the polymerase catalytic activity and forms the polymerase active center together with the largest subunit. The sequence is that of Probable DNA-directed RNA polymerase II subunit RPB2 homolog from Invertebrate iridescent virus 3 (IIV-3).